A 202-amino-acid polypeptide reads, in one-letter code: B-cell CLL/lymphoma 7 protein family member B (202 aa).

The segment at 53–202 is disordered; sequence DSKEKEKSKS…PVVPQTTSES (150 aa). Polar residues predominate over residues 90–99; that stretch reads ENSNQSSVSD. Positions 107 to 123 are enriched in low complexity; it reads SSTNSSPSPQQSESLSP. 7 positions are modified to phosphoserine: Ser-114, Ser-118, Ser-120, Ser-122, Ser-127, Ser-148, and Ser-152.

It belongs to the BCL7 family.

Positive regulator of apoptosis. Plays a role in the Wnt signaling pathway, negatively regulating the expression of Wnt signaling components CTNNB1 and HMGA1. Involved in cell cycle progression, maintenance of the nuclear structure and stem cell differentiation. May play a role in lung tumor development or progression. The chain is B-cell CLL/lymphoma 7 protein family member B (Bcl7b) from Mus musculus (Mouse).